An 88-amino-acid chain; its full sequence is UPF0297 protein SPCG_0205 (88 aa).

Belongs to the UPF0297 family.

This is UPF0297 protein SPCG_0205 from Streptococcus pneumoniae (strain CGSP14).